The chain runs to 145 residues: 3-hydroxyacyl-[acyl-carrier-protein] dehydratase FabZ (145 aa).

Residue His-49 is part of the active site.

Belongs to the thioester dehydratase family. FabZ subfamily.

It localises to the cytoplasm. It carries out the reaction a (3R)-hydroxyacyl-[ACP] = a (2E)-enoyl-[ACP] + H2O. Its function is as follows. Involved in unsaturated fatty acids biosynthesis. Catalyzes the dehydration of short chain beta-hydroxyacyl-ACPs and long chain saturated and unsaturated beta-hydroxyacyl-ACPs. The sequence is that of 3-hydroxyacyl-[acyl-carrier-protein] dehydratase FabZ from Rickettsia africae (strain ESF-5).